Here is a 136-residue protein sequence, read N- to C-terminus: Histone H3.1/H3.2 (136 aa).

The tract at residues 1-42 (MARTKQTARKSTGGKAPRKQLASKAARKAAPATGGVKKPHRY) is disordered. Lys5 is modified (N6,N6,N6-trimethyllysine; alternate). Lys5 carries the post-translational modification N6,N6-dimethyllysine; alternate. N6-methyllysine; alternate occurs at positions 5 and 10. Lys10 is modified (N6-acetyllysine; alternate). Ser11 is subject to Phosphoserine. Lys15 is modified (N6,N6-dimethyllysine; alternate). 5 positions are modified to N6-acetyllysine; alternate: Lys15, Lys19, Lys24, Lys28, and Lys37. Lys19, Lys24, Lys28, and Lys37 each carry N6-methyllysine; alternate. The segment covering 19–32 (KQLASKAARKAAPA) has biased composition (low complexity). N6,N6,N6-trimethyllysine; alternate occurs at positions 28 and 37. An N6,N6-dimethyllysine; alternate mark is found at Lys28 and Lys37. 2 positions are modified to N6-acetyllysine: Lys57 and Lys65. Lys80 is modified (N6,N6,N6-trimethyllysine; alternate). Lys80 is modified (N6,N6-dimethyllysine; alternate). At Lys80 the chain carries N6-methyllysine; alternate.

It belongs to the histone H3 family. The nucleosome is a histone octamer containing two molecules each of H2A, H2B, H3 and H4 assembled in one H3-H4 heterotetramer and two H2A-H2B heterodimers. The octamer wraps approximately 147 bp of DNA. Phosphorylated by ark1 to form H3S10ph in a cell cycle-dependent manner during mitosis and meiosis. H3S10ph is also formed by ssp2, promotes subsequent H3K14ac formation by gcn5, and is required for transcriptional activation through TBP recruitment to the promoters. Dephosphorylation is performed by sds21. In terms of processing, mono-, di- and trimethylated by the COMPASS complex to form H3K4me1/2/3. H3K4me activates gene expression by regulating transcription elongation and plays a role in telomere length maintenance. H3K4me enrichment correlates with transcription levels, and occurs in a 5' to 3' gradient with H3K4me3 enrichment at the 5'-end of genes, shifting to H3K4me2 and then H3K4me1. Methylated by clr4 to form H3K9me1. H3K9me1 represents a specific tag for epigenetic transcriptional repression by recruiting swi6/HP1 to methylated histones. Targeting to histone probably involves clr3 and rik1. Essential for silencing of centromeres and directional switching of the mating type. Methylated by set2 to form H3K36me. H3K36me represses gene expression. Methylated by dot1 to form H3K79me. H3K79me is required for association of SIR proteins with telomeric regions and for telomeric silencing. The COMPASS-mediated formation of H3K4me2/3 and the dot1-mediated formation of H3K79me require H2BK123ub1. Post-translationally, acetylation of histone H3 leads to transcriptional activation. H3K14ac formation by gcn5 is promoted by H3S10ph. H3K14ac can also be formed by esa1. H3K56ac formation occurs predominantly in newly synthesized H3 molecules during G1, S and G2/M of the cell cycle and may be involved in DNA repair.

The protein resides in the nucleus. It localises to the chromosome. Its function is as follows. Core component of nucleosome. Nucleosomes wrap and compact DNA into chromatin, limiting DNA accessibility to the cellular machineries which require DNA as a template. Histones thereby play a central role in transcription regulation, DNA repair, DNA replication and chromosomal stability. DNA accessibility is regulated via a complex set of post-translational modifications of histones, also called histone code, and nucleosome remodeling. This Schizosaccharomyces pombe (strain 972 / ATCC 24843) (Fission yeast) protein is Histone H3.1/H3.2 (hht1).